A 266-amino-acid polypeptide reads, in one-letter code: Vitamin B12-binding protein (266 aa).

Residues 1 to 22 form the signal peptide; it reads MAKSLFRALVALSFLAPLWLNA. The region spanning 25 to 266 is the Fe/B12 periplasmic-binding domain; sequence RVITLSPANT…QLCNALSQVD (242 aa). Cyanocob(III)alamin contacts are provided by residues Tyr-50 and 242–246; that span reads DWFER. Cys-183 and Cys-259 are disulfide-bonded.

It belongs to the BtuF family. In terms of assembly, the complex is composed of two ATP-binding proteins (BtuD), two transmembrane proteins (BtuC) and a solute-binding protein (BtuF).

The protein resides in the periplasm. Its function is as follows. Part of the ABC transporter complex BtuCDF involved in vitamin B12 import. Binds vitamin B12 and delivers it to the periplasmic surface of BtuC. The polypeptide is Vitamin B12-binding protein (Shigella flexneri).